The sequence spans 374 residues: Chaperone protein DnaJ (374 aa).

One can recognise a J domain in the interval 5–70 (DYYEVLGVNL…RKRASYDQFG (66 aa)). Residues 133–210 (GLSRTIKVPT…CHGQGRQQQT (78 aa)) form a CR-type zinc finger. Zn(2+) contacts are provided by Cys-146, Cys-149, Cys-162, Cys-165, Cys-184, Cys-187, Cys-198, and Cys-201. CXXCXGXG motif repeat units follow at residues 146–153 (CKTCNGSG), 162–169 (CPRCNGSG), 184–191 (CSVCRGRG), and 198–205 (CTDCHGQG).

The protein belongs to the DnaJ family. As to quaternary structure, homodimer. Zn(2+) serves as cofactor.

It is found in the cytoplasm. In terms of biological role, participates actively in the response to hyperosmotic and heat shock by preventing the aggregation of stress-denatured proteins and by disaggregating proteins, also in an autonomous, DnaK-independent fashion. Unfolded proteins bind initially to DnaJ; upon interaction with the DnaJ-bound protein, DnaK hydrolyzes its bound ATP, resulting in the formation of a stable complex. GrpE releases ADP from DnaK; ATP binding to DnaK triggers the release of the substrate protein, thus completing the reaction cycle. Several rounds of ATP-dependent interactions between DnaJ, DnaK and GrpE are required for fully efficient folding. Also involved, together with DnaK and GrpE, in the DNA replication of plasmids through activation of initiation proteins. In Coxiella burnetii (strain RSA 331 / Henzerling II), this protein is Chaperone protein DnaJ.